Here is a 208-residue protein sequence, read N- to C-terminus: Uracil phosphoribosyltransferase (208 aa).

5-phospho-alpha-D-ribose 1-diphosphate is bound by residues R78, R103, and 130–138 (DPMLATGGS). Residues I193 and 198–200 (GDA) each bind uracil. Residue D199 coordinates 5-phospho-alpha-D-ribose 1-diphosphate.

Belongs to the UPRTase family. Requires Mg(2+) as cofactor.

The catalysed reaction is UMP + diphosphate = 5-phospho-alpha-D-ribose 1-diphosphate + uracil. It functions in the pathway pyrimidine metabolism; UMP biosynthesis via salvage pathway; UMP from uracil: step 1/1. Allosterically activated by GTP. Catalyzes the conversion of uracil and 5-phospho-alpha-D-ribose 1-diphosphate (PRPP) to UMP and diphosphate. This chain is Uracil phosphoribosyltransferase, found in Photorhabdus laumondii subsp. laumondii (strain DSM 15139 / CIP 105565 / TT01) (Photorhabdus luminescens subsp. laumondii).